We begin with the raw amino-acid sequence, 447 residues long: N-succinylarginine dihydrolase (447 aa).

Substrate is bound by residues 19-28, Asn110, and 137-138; these read AGLSFGNEAS and HR. The active site involves Glu174. Position 212 (Arg212) interacts with substrate. His248 is a catalytic residue. Substrate contacts are provided by Asp250 and Asn359. The active-site Nucleophile is the Cys365.

This sequence belongs to the succinylarginine dihydrolase family. Homodimer.

It carries out the reaction N(2)-succinyl-L-arginine + 2 H2O + 2 H(+) = N(2)-succinyl-L-ornithine + 2 NH4(+) + CO2. Its pathway is amino-acid degradation; L-arginine degradation via AST pathway; L-glutamate and succinate from L-arginine: step 2/5. Functionally, catalyzes the hydrolysis of N(2)-succinylarginine into N(2)-succinylornithine, ammonia and CO(2). The sequence is that of N-succinylarginine dihydrolase from Salmonella paratyphi A (strain ATCC 9150 / SARB42).